The primary structure comprises 442 residues: Casein kinase 1-like protein 10 (442 aa).

A Protein kinase domain is found at 9–278; the sequence is FKLGRKIGSG…LKRLFRDLFI (270 aa). ATP is bound by residues 15–23 and Lys-38; that span reads IGSGSFGEL. Asp-128 functions as the Proton acceptor in the catalytic mechanism. Disordered stretches follow at residues 299 to 323 and 381 to 421; these read GSISKPRPNPKPALDPPGPSAERNE and AVMS…LSAR. Over residues 305–317 the composition is skewed to pro residues; the sequence is RPNPKPALDPPGP. The span at 384–394 shows a compositional bias: low complexity; that stretch reads SSSQPGSSGEL. The span at 400-417 shows a compositional bias: polar residues; it reads SKLFSSSAQKIQPVQETK.

This sequence belongs to the protein kinase superfamily. CK1 Ser/Thr protein kinase family. Casein kinase I subfamily. Monomer. In terms of processing, autophosphorylated.

It localises to the cytoplasm. The protein localises to the cell junction. Its subcellular location is the plasmodesma. The catalysed reaction is L-seryl-[protein] + ATP = O-phospho-L-seryl-[protein] + ADP + H(+). It catalyses the reaction L-threonyl-[protein] + ATP = O-phospho-L-threonyl-[protein] + ADP + H(+). Casein kinases are operationally defined by their preferential utilization of acidic proteins such as caseins as substrates. It can phosphorylate a large number of proteins. In Arabidopsis thaliana (Mouse-ear cress), this protein is Casein kinase 1-like protein 10.